The following is a 282-amino-acid chain: DegV domain-containing protein SPy_0865/M5005_Spy0672 (282 aa).

The region spanning 3 to 280 (LAVITDSTAT…EGAIAFGVTP (278 aa)) is the DegV domain. Residues T61 and S94 each contribute to the hexadecanoate site.

Its function is as follows. May bind long-chain fatty acids, such as palmitate, and may play a role in lipid transport or fatty acid metabolism. The chain is DegV domain-containing protein SPy_0865/M5005_Spy0672 from Streptococcus pyogenes serotype M1.